We begin with the raw amino-acid sequence, 162 residues long: G/U mismatch-specific DNA glycosylase (162 aa).

It belongs to the uracil-DNA glycosylase (UDG) superfamily. TDG/mug family. In terms of assembly, binds DNA as a monomer.

It is found in the cytoplasm. The enzyme catalyses Specifically hydrolyzes mismatched double-stranded DNA and polynucleotides, releasing free uracil.. Its function is as follows. Excises ethenocytosine and uracil, which can arise by alkylation or deamination of cytosine, respectively, from the corresponding mispairs with guanine in ds-DNA. It is capable of hydrolyzing the carbon-nitrogen bond between the sugar-phosphate backbone of the DNA and the mispaired base. The complementary strand guanine functions in substrate recognition. Required for DNA damage lesion repair in stationary-phase cells. The sequence is that of G/U mismatch-specific DNA glycosylase from Serratia marcescens.